Reading from the N-terminus, the 203-residue chain is Thymidylate kinase (203 aa).

ATP is bound at residue 10 to 17; the sequence is GIDGAGKS.

The protein belongs to the thymidylate kinase family.

The enzyme catalyses dTMP + ATP = dTDP + ADP. Functionally, phosphorylation of dTMP to form dTDP in both de novo and salvage pathways of dTTP synthesis. This Cupriavidus pinatubonensis (strain JMP 134 / LMG 1197) (Cupriavidus necator (strain JMP 134)) protein is Thymidylate kinase.